The chain runs to 389 residues: Maintenance of mitochondrial morphology protein 1-1 (389 aa).

Residues 1-22 (MSQFVLPAVASEGIINWPFLTG) lie on the Lumenal side of the membrane. A helical transmembrane segment spans residues 23-43 (FMLGQFSVGLVLLIFVRFFIF). Over 44–389 (SDQTEPDINT…YRSLQTSPRR (346 aa)) the chain is Cytoplasmic. In terms of domain architecture, SMP-LTD spans 83–278 (QPESLDWFSV…YPEYQQFELP (196 aa)). Disordered regions lie at residues 283–345 (KTSA…PKFI) and 360–389 (FYEM…SPRR). A compositionally biased stretch (polar residues) spans 330–341 (MSMSSQRPNINN).

Belongs to the MMM1 family. In terms of assembly, homodimer. Component of the ER-mitochondria encounter structure (ERMES) or MDM complex, composed of MMM1, MDM10, MDM12 and MDM34. An MMM1 homodimer associates with one molecule of MDM12 on each side in a pairwise head-to-tail manner, and the SMP-LTD domains of MMM1 and MDM12 generate a continuous hydrophobic tunnel for phospholipid trafficking.

It is found in the endoplasmic reticulum membrane. Functionally, component of the ERMES/MDM complex, which serves as a molecular tether to connect the endoplasmic reticulum (ER) and mitochondria. Components of this complex are involved in the control of mitochondrial shape and protein biogenesis, and function in nonvesicular lipid trafficking between the ER and mitochondria. The MDM12-MMM11 subcomplex functions in the major beta-barrel assembly pathway that is responsible for biogenesis of all outer membrane beta-barrel proteins, and acts in a late step after the SAM complex. The MDM10-MDM12-MMM1 subcomplex further acts in the TOM40-specific pathway after the action of the MDM12-MMM1 complex. Essential for establishing and maintaining the structure of mitochondria and maintenance of mtDNA nucleoids. The sequence is that of Maintenance of mitochondrial morphology protein 1-1 from Yarrowia lipolytica (strain CLIB 122 / E 150) (Yeast).